The sequence spans 150 residues: Large ribosomal subunit protein bL9 (150 aa).

This sequence belongs to the bacterial ribosomal protein bL9 family.

In terms of biological role, binds to the 23S rRNA. The chain is Large ribosomal subunit protein bL9 from Streptococcus pyogenes serotype M5 (strain Manfredo).